Consider the following 106-residue polypeptide: Toxin-like structure LSTX-D6 (106 aa).

The first 20 residues, 1–20 (MMKVLVVAALLVTLISYSSS), serve as a signal peptide directing secretion. Residues 21 to 41 (EGIDDLEADELLSLMANEQTR) constitute a propeptide that is removed on maturation. 4 disulfides stabilise this stretch: Cys-45–Cys-60, Cys-52–Cys-69, Cys-59–Cys-85, and Cys-71–Cys-83.

Belongs to the neurotoxin 19 (CSTX) family. 02 (D7) subfamily. Expressed by the venom gland.

It is found in the secreted. This chain is Toxin-like structure LSTX-D6, found in Lycosa singoriensis (Wolf spider).